We begin with the raw amino-acid sequence, 130 residues long: S-adenosylmethionine decarboxylase proenzyme (130 aa).

Residue Ser66 is the Schiff-base intermediate with substrate; via pyruvic acid of the active site. Ser66 bears the Pyruvic acid (Ser); by autocatalysis mark. The active-site Proton acceptor; for processing activity is the His71. The active-site Proton donor; for catalytic activity is the Cys86.

Belongs to the prokaryotic AdoMetDC family. Type 1 subfamily. In terms of assembly, heterotetramer of two alpha and two beta chains arranged as a dimer of alpha/beta heterodimers. It depends on pyruvate as a cofactor. Is synthesized initially as an inactive proenzyme. Formation of the active enzyme involves a self-maturation process in which the active site pyruvoyl group is generated from an internal serine residue via an autocatalytic post-translational modification. Two non-identical subunits are generated from the proenzyme in this reaction, and the pyruvate is formed at the N-terminus of the alpha chain, which is derived from the carboxyl end of the proenzyme. The post-translation cleavage follows an unusual pathway, termed non-hydrolytic serinolysis, in which the side chain hydroxyl group of the serine supplies its oxygen atom to form the C-terminus of the beta chain, while the remainder of the serine residue undergoes an oxidative deamination to produce ammonia and the pyruvoyl group blocking the N-terminus of the alpha chain.

The enzyme catalyses S-adenosyl-L-methionine + H(+) = S-adenosyl 3-(methylsulfanyl)propylamine + CO2. The protein operates within amine and polyamine biosynthesis; S-adenosylmethioninamine biosynthesis; S-adenosylmethioninamine from S-adenosyl-L-methionine: step 1/1. Its function is as follows. Catalyzes the decarboxylation of S-adenosylmethionine to S-adenosylmethioninamine (dcAdoMet), the propylamine donor required for the synthesis of the polyamines spermine and spermidine from the diamine putrescine. This chain is S-adenosylmethionine decarboxylase proenzyme, found in Bacillus cytotoxicus (strain DSM 22905 / CIP 110041 / 391-98 / NVH 391-98).